Reading from the N-terminus, the 138-residue chain is Putative pre-16S rRNA nuclease (138 aa).

The protein belongs to the YqgF nuclease family.

Its subcellular location is the cytoplasm. In terms of biological role, could be a nuclease involved in processing of the 5'-end of pre-16S rRNA. The protein is Putative pre-16S rRNA nuclease of Shigella dysenteriae serotype 1 (strain Sd197).